A 369-amino-acid chain; its full sequence is Choline-phosphate cytidylyltransferase B (369 aa).

The tract at residues 1-27 (MPVVTTDAESETGIPKSLSNEPPSETM) is disordered. CTP contacts are provided by isoleucine 84, phenylalanine 85, histidine 92, and lysine 122. Residues lysine 122 and tryptophan 151 each coordinate phosphocholine. The CTP site is built by histidine 168, aspartate 169, tyrosine 173, glutamine 195, arginine 196, threonine 197, and isoleucine 200. The segment at 309–369 (RMLQALSPKQ…SMSEGDEDEK (61 aa)) is disordered. Phosphoserine occurs at positions 315, 319, 322, 323, 329, 331, and 335. Over residues 319 to 339 (SPVSSPTRSRSPSRSPSPTFS) the composition is skewed to low complexity. A Phosphothreonine modification is found at threonine 345. 6 positions are modified to phosphoserine: serine 346, serine 349, serine 350, serine 355, serine 360, and serine 362. The segment covering 351–362 (PKAASASISSMS) has biased composition (low complexity).

The protein belongs to the cytidylyltransferase family. Homodimer. In terms of processing, phosphorylated. Post-translationally, extensively phosphorylated. In terms of tissue distribution, highly expressed in testis, placenta, brain, ovary, liver and fetal lung. As to expression, expressed in brain, liver and fetal lung.

Its subcellular location is the cytoplasm. The protein localises to the endoplasmic reticulum. It carries out the reaction phosphocholine + CTP + H(+) = CDP-choline + diphosphate. Its pathway is phospholipid metabolism; phosphatidylcholine biosynthesis; phosphatidylcholine from phosphocholine: step 1/2. Functionally, catalyzes the key rate-limiting step in the CDP-choline pathway for phosphatidylcholine biosynthesis. In Homo sapiens (Human), this protein is Choline-phosphate cytidylyltransferase B (PCYT1B).